The chain runs to 321 residues: Peroxidase 70 (321 aa).

The N-terminal stretch at 1–25 (MASSSFTSLSVMVLLCLAAAAVASA) is a signal peptide. Gln-26 carries the post-translational modification Pyrrolidone carboxylic acid. 4 disulfides stabilise this stretch: Cys-36-Cys-116, Cys-69-Cys-74, Cys-122-Cys-317, and Cys-201-Cys-226. His-67 (proton acceptor) is an active-site residue. Ca(2+) is bound by residues Asp-68, Val-71, Gly-73, Asp-75, and Ser-77. Asn-81 is a glycosylation site (N-linked (GlcNAc...) asparagine). Pro-164 serves as a coordination point for substrate. Residue Asn-172 is glycosylated (N-linked (GlcNAc...) asparagine). Position 194 (His-194) interacts with heme b. Thr-195 contacts Ca(2+). The N-linked (GlcNAc...) asparagine glycan is linked to Asn-210. 3 residues coordinate Ca(2+): Asp-241, Thr-244, and Asp-249.

This sequence belongs to the peroxidase family. Classical plant (class III) peroxidase subfamily. Heme b is required as a cofactor. It depends on Ca(2+) as a cofactor.

It is found in the secreted. The catalysed reaction is 2 a phenolic donor + H2O2 = 2 a phenolic radical donor + 2 H2O. Its function is as follows. Removal of H(2)O(2), oxidation of toxic reductants, biosynthesis and degradation of lignin, suberization, auxin catabolism, response to environmental stresses such as wounding, pathogen attack and oxidative stress. These functions might be dependent on each isozyme/isoform in each plant tissue. In Zea mays (Maize), this protein is Peroxidase 70 (PER70).